Here is a 462-residue protein sequence, read N- to C-terminus: tRNA modification GTPase MnmE (462 aa).

Residues R23, E88, and R127 each coordinate (6S)-5-formyl-5,6,7,8-tetrahydrofolate. The TrmE-type G domain occupies 224 to 383 (GLATVIIGRP…LEKAIADLFF (160 aa)). A K(+)-binding site is contributed by N234. GTP is bound by residues 234 to 239 (NVGKSS), 253 to 259 (TDIPGTT), and 278 to 281 (DTAG). S238 serves as a coordination point for Mg(2+). K(+)-binding residues include T253, I255, and T258. T259 contacts Mg(2+). Position 462 (K462) interacts with (6S)-5-formyl-5,6,7,8-tetrahydrofolate.

The protein belongs to the TRAFAC class TrmE-Era-EngA-EngB-Septin-like GTPase superfamily. TrmE GTPase family. In terms of assembly, homodimer. Heterotetramer of two MnmE and two MnmG subunits. K(+) serves as cofactor.

It localises to the cytoplasm. Exhibits a very high intrinsic GTPase hydrolysis rate. Involved in the addition of a carboxymethylaminomethyl (cmnm) group at the wobble position (U34) of certain tRNAs, forming tRNA-cmnm(5)s(2)U34. This Geobacillus thermodenitrificans (strain NG80-2) protein is tRNA modification GTPase MnmE.